The chain runs to 468 residues: Probable serine/threonine-protein phosphatase 2A activator 2 (468 aa).

Over residues 412 to 424 (STTTNNNNNNITS) the composition is skewed to low complexity. The tract at residues 412-468 (STTTNNNNNNITSGDHCNDNEQQCSETHNHDHNHNHNHNHNHPPPPPQQQRSYFPLD) is disordered.

This sequence belongs to the PTPA-type PPIase family.

The protein resides in the cytoplasm. The enzyme catalyses [protein]-peptidylproline (omega=180) = [protein]-peptidylproline (omega=0). Its function is as follows. PPIases accelerate the folding of proteins. It catalyzes the cis-trans isomerization of proline imidic peptide bonds in oligopeptides. Acts as a regulatory subunit for PP2A-like phosphatases modulating their activity or substrate specificity, probably by inducing a conformational change in the catalytic subunit, a direct target of the PPIase. This chain is Probable serine/threonine-protein phosphatase 2A activator 2 (ppp2r4B), found in Dictyostelium discoideum (Social amoeba).